Here is a 542-residue protein sequence, read N- to C-terminus: Chaperonin GroEL 2 (542 aa).

ATP is bound by residues 30 to 33 (TLGP), Lys-51, 87 to 91 (DGTTT), Gly-415, and Asp-496.

Belongs to the chaperonin (HSP60) family. In terms of assembly, forms a cylinder of 14 subunits composed of two heptameric rings stacked back-to-back. Interacts with the co-chaperonin GroES.

The protein resides in the cytoplasm. It catalyses the reaction ATP + H2O + a folded polypeptide = ADP + phosphate + an unfolded polypeptide.. Together with its co-chaperonin GroES, plays an essential role in assisting protein folding. The GroEL-GroES system forms a nano-cage that allows encapsulation of the non-native substrate proteins and provides a physical environment optimized to promote and accelerate protein folding. The chain is Chaperonin GroEL 2 from Chelativorans sp. (strain BNC1).